The following is a 105-amino-acid chain: SH3 domain-binding glutamic acid-rich-like protein 2 (105 aa).

An SH3-binding motif is present at residues 61-67; it reads KGNPLPP.

Belongs to the SH3BGR family.

It localises to the nucleus. The sequence is that of SH3 domain-binding glutamic acid-rich-like protein 2 (sh3bgrl2) from Danio rerio (Zebrafish).